The following is a 357-amino-acid chain: 3-isopropylmalate dehydrogenase (357 aa).

Residues Arg97, Arg107, Arg135, and Asp224 each contribute to the substrate site. The Mg(2+) site is built by Asp224, Asp248, and Asp252. 282–294 (GSAPDIAGQDKAN) provides a ligand contact to NAD(+).

It belongs to the isocitrate and isopropylmalate dehydrogenases family. LeuB type 1 subfamily. Homodimer. Mg(2+) serves as cofactor. It depends on Mn(2+) as a cofactor.

Its subcellular location is the cytoplasm. The enzyme catalyses (2R,3S)-3-isopropylmalate + NAD(+) = 4-methyl-2-oxopentanoate + CO2 + NADH. The protein operates within amino-acid biosynthesis; L-leucine biosynthesis; L-leucine from 3-methyl-2-oxobutanoate: step 3/4. Its function is as follows. Catalyzes the oxidation of 3-carboxy-2-hydroxy-4-methylpentanoate (3-isopropylmalate) to 3-carboxy-4-methyl-2-oxopentanoate. The product decarboxylates to 4-methyl-2 oxopentanoate. The protein is 3-isopropylmalate dehydrogenase of Parasynechococcus marenigrum (strain WH8102).